The chain runs to 64 residues: uncharacterized protein (64 aa).

The interval 1–64 is disordered; sequence MMITRGWEGW…LDPAISRSSS (64 aa). Over residues 16-28 the composition is skewed to gly residues; the sequence is RGAGTGTGLGGPG.

This is an uncharacterized protein from Homo sapiens (Human).